The sequence spans 220 residues: 7-cyano-7-deazaguanine synthase (220 aa).

An ATP-binding site is contributed by 10 to 20 (FSGGQDSTTCL). Zn(2+) contacts are provided by cysteine 186, cysteine 195, cysteine 198, and cysteine 201.

It belongs to the QueC family. As to quaternary structure, homodimer. The cofactor is Zn(2+).

It carries out the reaction 7-carboxy-7-deazaguanine + NH4(+) + ATP = 7-cyano-7-deazaguanine + ADP + phosphate + H2O + H(+). It functions in the pathway purine metabolism; 7-cyano-7-deazaguanine biosynthesis. Its function is as follows. Catalyzes the ATP-dependent conversion of 7-carboxy-7-deazaguanine (CDG) to 7-cyano-7-deazaguanine (preQ(0)). The protein is 7-cyano-7-deazaguanine synthase of Bacillus thuringiensis (strain Al Hakam).